The primary structure comprises 132 residues: Urease subunit beta (132 aa).

It belongs to the urease beta subunit family. Heterotrimer of UreA (gamma), UreB (beta) and UreC (alpha) subunits. Three heterotrimers associate to form the active enzyme.

The protein resides in the cytoplasm. It catalyses the reaction urea + 2 H2O + H(+) = hydrogencarbonate + 2 NH4(+). It participates in nitrogen metabolism; urea degradation; CO(2) and NH(3) from urea (urease route): step 1/1. The chain is Urease subunit beta from Natronomonas pharaonis (strain ATCC 35678 / DSM 2160 / CIP 103997 / JCM 8858 / NBRC 14720 / NCIMB 2260 / Gabara) (Halobacterium pharaonis).